Reading from the N-terminus, the 270-residue chain is Shikimate dehydrogenase (NADP(+)) (270 aa).

Shikimate is bound by residues 15 to 17 (SKS) and Thr-62. The active-site Proton acceptor is Lys-66. Shikimate-binding residues include Asn-87 and Asp-102. Residues 127-131 (GAGGA), 151-156 (NRTVAR), and Met-214 contribute to the NADP(+) site. Shikimate is bound at residue Tyr-216. Residue Gly-238 participates in NADP(+) binding.

This sequence belongs to the shikimate dehydrogenase family. In terms of assembly, homodimer.

The catalysed reaction is shikimate + NADP(+) = 3-dehydroshikimate + NADPH + H(+). It participates in metabolic intermediate biosynthesis; chorismate biosynthesis; chorismate from D-erythrose 4-phosphate and phosphoenolpyruvate: step 4/7. Functionally, involved in the biosynthesis of the chorismate, which leads to the biosynthesis of aromatic amino acids. Catalyzes the reversible NADPH linked reduction of 3-dehydroshikimate (DHSA) to yield shikimate (SA). This Alkalilimnicola ehrlichii (strain ATCC BAA-1101 / DSM 17681 / MLHE-1) protein is Shikimate dehydrogenase (NADP(+)).